We begin with the raw amino-acid sequence, 443 residues long: Transcriptional adapter 2-alpha (443 aa).

At Pro6 the chain carries Phosphoserine; in variant Ser-6. The ZZ-type zinc finger occupies 12–69 (SDKPPCRGCSSYLMEPYIKCAECGPPPFFLCLQCFTRGFEYKKHQSDHTYEIMTSDFP). The Zn(2+) site is built by Cys17, Cys20, Cys31, Cys34, Cys42, Cys45, His55, and His59. In terms of domain architecture, SANT spans 70 to 122 (VLDPSWTAQEEMALLEAVMDCGFGNWQDVANQMCTKTKEECEKHYMKHFINNP). Glycyl lysine isopeptide (Lys-Gly) (interchain with G-Cter in SUMO2) cross-links involve residues Lys132 and Lys138. A disordered region spans residues 348-372 (SPSIPMASNSGRRSAPPLNLTGLPG). One can recognise an SWIRM domain in the interval 356-443 (NSGRRSAPPL…LIREGYITKG (88 aa)). A DNA-binding region spans residues 426–435 (KTRKIYDFLI).

As to quaternary structure, interacts with GCN5 and NR3C1. Associated with the P/CAF protein in the PCAF complex. Component of the PCAF complex, at least composed of TADA2L/ADA2, TADA3L/ADA3, TAF5L/PAF65-beta, TAF6L/PAF65-alpha, TAF10/TAFII30, TAF12/TAFII20, TAF9/TAFII31 and TRRAP. Component of the ADA2A-containing complex (ATAC), composed of KAT14, KAT2A, TADA2L, TADA3L, ZZ3, MBIP, WDR5, YEATS2, CCDC101 and DR1. Interacts with CCDC134. Expressed in all tissues, but most abundantly in testis.

It is found in the nucleus. The protein localises to the chromosome. Its function is as follows. Component of the ATAC complex, a complex with histone acetyltransferase activity on histones H3 and H4. Required for the function of some acidic activation domains, which activate transcription from a distant site. Binds double-stranded DNA. Binds dinucleosomes, probably at the linker region between neighboring nucleosomes. Plays a role in chromatin remodeling. May promote TP53/p53 'Lys-321' acetylation, leading to reduced TP53 stability and transcriptional activity. May also promote XRCC6 acetylation thus facilitating cell apoptosis in response to DNA damage. The polypeptide is Transcriptional adapter 2-alpha (TADA2A) (Homo sapiens (Human)).